A 138-amino-acid polypeptide reads, in one-letter code: Transmembrane protein 170A (138 aa).

Residues 1 to 44 lie on the Lumenal side of the membrane; sequence MEGSEAGGGGLLQQILSLRLVPRVGNGTTYSSPLSTFPEMWYGV. Residue asparagine 26 is glycosylated (N-linked (GlcNAc...) asparagine). Residues 45–65 form a helical membrane-spanning segment; that stretch reads FLWALVSSLSFHVPAALLALF. Residues 66-79 lie on the Cytoplasmic side of the membrane; it reads TLRHHKYGRFMSVS. The chain crosses the membrane as a helical span at residues 80-100; that stretch reads LLLMGIVGPITAGILTSAAIA. The Lumenal portion of the chain corresponds to 101 to 110; sequence GVYRAAGKKM. A helical transmembrane segment spans residues 111–131; that stretch reads IPFEALIFEVGQTFCVVVVSF. Over 132-138 the chain is Cytoplasmic; that stretch reads LRILATL.

It belongs to the TMEM170 family.

It localises to the endoplasmic reticulum membrane. It is found in the nucleus envelope. Its function is as follows. May regulate membrane morphogenesis in the endoplasmic reticulum (ER) by promoting ER sheet formation at the expense of ER tubules. In Gallus gallus (Chicken), this protein is Transmembrane protein 170A (TMEM170A).